We begin with the raw amino-acid sequence, 504 residues long: MSPIRSKKKIKNEPRLTVDDVNVVPPKKIRPAIKGTVVGNFMEWYDFGIYGYLTVTMTAVFTQGLPQEWQLLAVMFGFAVSYLVRPLGGLVLGPLGDKVGRQKVLYVTMAMMAVSTALIGLLPTAASIGAWALVLLYLLKMVQGFSTGGEYAGATTYVAEFAPDRRRGFFGAFLDMGSYLGFAAGASVVAITTWVTTHFYGATAMEDFGWRIPFLTAIPLGIIAVYLRTRIPETPAFENNQDEPNAVVEKDTEDPYARLGLAGVIRHHWRPLLIGIAIVAATNTAGYALTSYMPVYLEEQIGLHSASAAAVTVPILVVMSLLLPFVGMWSDRVGRKPVYATAVAATLILMVPAFLIMNTGTIGAVLIALSMVAIPTGLYVALSASALPALFPTASRFSGMGISYNISVSLFGGTTPLITQFLLQKTGLDIVPALYIMFFSAIAGVALLFMTESSQKPLLGSFPTVETKSEAVEIVKNQDEDPNIDLSHMPFPDEENVGAEKQNA.

The next 11 helical transmembrane spans lie at 41-61, 71-91, 118-138, 169-189, 207-227, 272-292, 309-329, 337-357, 362-382, 399-419, and 430-450; these read FMEW…TAVF, LLAV…GGLV, LIGL…LLYL, FFGA…ASVV, DFGW…AVYL, LLIG…LTSY, AAVT…VGMW, PVYA…FLIM, IGAV…YVAL, GMGI…PLIT, and IVPA…LLFM. A disordered region spans residues 477 to 504; the sequence is NQDEDPNIDLSHMPFPDEENVGAEKQNA.

The protein belongs to the major facilitator superfamily.

It is found in the cell membrane. Uptake is activated by osmotic stress. Inhibited by CCCP. Its function is as follows. Involved in the uptake of osmoprotectants. Can transport ectoine and proline. Protons are probably the coupling ions. In Corynebacterium glutamicum (strain ATCC 13032 / DSM 20300 / JCM 1318 / BCRC 11384 / CCUG 27702 / LMG 3730 / NBRC 12168 / NCIMB 10025 / NRRL B-2784 / 534), this protein is Ectoine/proline transporter ProP.